Reading from the N-terminus, the 431-residue chain is tRNA(Ile)-lysidine synthase (431 aa).

Residue 25 to 30 (SGGLDS) coordinates ATP.

It belongs to the tRNA(Ile)-lysidine synthase family.

The protein localises to the cytoplasm. The enzyme catalyses cytidine(34) in tRNA(Ile2) + L-lysine + ATP = lysidine(34) in tRNA(Ile2) + AMP + diphosphate + H(+). Functionally, ligates lysine onto the cytidine present at position 34 of the AUA codon-specific tRNA(Ile) that contains the anticodon CAU, in an ATP-dependent manner. Cytidine is converted to lysidine, thus changing the amino acid specificity of the tRNA from methionine to isoleucine. This Legionella pneumophila (strain Paris) protein is tRNA(Ile)-lysidine synthase.